The chain runs to 435 residues: Diguanylate cyclase TpbB (435 aa).

The Cytoplasmic portion of the chain corresponds to 1–22 (MNRRRRYTGSNPSLRRVLYRAH). A helical transmembrane segment spans residues 23–43 (LGVALVAVFTAGLAVTLVGLL). Topologically, residues 44–154 (TLRAYADPNQ…VKGSGGSLLR (111 aa)) are periplasmic. Residues 155 to 175 (FLLTGFAGMVLCLLLTALGAF) traverse the membrane as a helical segment. Residues 176-435 (YLSRRLVRGI…DSATPEAPPK (260 aa)) lie on the Cytoplasmic side of the membrane. An HAMP domain is found at 183–236 (RGIVGPLDQLAKVAHTVRRERDFEKRVPEAGIAELSQLGEDFNALLDELESWQA). The GGDEF domain occupies 279–415 (EQLAVLFIDS…GSRRLAELND (137 aa)). Residues Ser288 and Asp330 each contribute to the Mg(2+) site. The Proton acceptor role is filled by Asp330. Positions 414–426 (NDPRILQEEKEID) are enriched in basic and acidic residues. Residues 414–435 (NDPRILQEEKEIDSATPEAPPK) form a disordered region.

It depends on Mg(2+) as a cofactor. Phosphorylated at both Tyr residues and Ser/Thr residues. Dephosphorylated and inactivated by TpbA.

It is found in the cell inner membrane. It carries out the reaction 2 GTP = 3',3'-c-di-GMP + 2 diphosphate. Its pathway is purine metabolism; 3',5'-cyclic di-GMP biosynthesis. Its activity is regulated as follows. Activity is tightly controlled by YfiR, a small periplasmic protein, and the OmpA/Pal-like outer-membrane lipoprotein YfiB. Diguanylate cyclase activity is inhibited by the specific interaction of YfiR with the TpbB periplasmic domain and is activated by YfiB, which releases the YfiR-mediated repression through sequestration of YfiR to the outer membrane. Activity is also controlled by dephosphorylation of the periplasmic domain by the tyrosine phosphatase TpbA. In terms of biological role, catalyzes the synthesis of cyclic-di-GMP (c-di-GMP) via the condensation of 2 GTP molecules. Important for the regulation of biofilm maintenance when exposed to peroxide. Part of the YfiB-TpbB-YfiR (or yfiBNR) system, encoding a tripartite signaling module that modulates intracellular c-di-GMP levels. The system is a key regulator of the small colony variant (SCV) phenotype, and plays an important role in biofilm formation and in vivo persistence. The c-di-GMP produced by TpbB/YfiN stimulates the production of the Pel and Psl exopolysaccharides, which promotes surface attachment, generates an SCV phenotype and confers resistance against phagocytosis. This chain is Diguanylate cyclase TpbB, found in Pseudomonas aeruginosa (strain UCBPP-PA14).